We begin with the raw amino-acid sequence, 88 residues long: Alpha-latrotoxin-associated low molecular weight protein (88 aa).

A signal peptide spans 1–18 (MSKLFFVVFLCLIISVFA).

This sequence belongs to the arthropod CHH/MIH/GIH/VIH hormone family. As to expression, expressed by the venom gland.

It localises to the secreted. Its function is as follows. May increase the toxicity of alpha-latrotoxin and/or other venom components. Is non-toxic to mice and to the cockroach Periplaneta americana. The sequence is that of Alpha-latrotoxin-associated low molecular weight protein from Latrodectus tredecimguttatus (Mediterranean black widow spider).